The chain runs to 126 residues: Profilin (126 aa).

This sequence belongs to the profilin family. In terms of assembly, occurs in many kinds of cells as a complex with monomeric actin in a 1:1 ratio. In terms of tissue distribution, expressed in ovary and head.

The protein resides in the cytoplasm. It localises to the cytoskeleton. Binds to actin and affects the structure of the cytoskeleton. At high concentrations, profilin prevents the polymerization of actin, whereas it enhances it at low concentrations. By binding to PIP2, it may inhibit the formation of IP3 and DG. This profilin is required for intercellular cytoplasm transport during Drosophila oogenesis. Function in neurons is essential for adult survival, and is important for climbing behavior and activity. The chain is Profilin (chic) from Drosophila melanogaster (Fruit fly).